The sequence spans 421 residues: Protein PHLOEM UNLOADING MODULATOR (421 aa).

Helical transmembrane passes span 30–50, 60–80, 124–144, 158–178, 286–306, 323–343, and 397–417; these read LMPV…LFYK, IPFL…ALCV, HIIG…SVVF, YIFT…STIL, AMAW…LFVA, CIVA…IWSA, and TVFA…ALTL.

It belongs to the sphingomyelin synthase family.

The protein resides in the membrane. It functions in the pathway sphingolipid metabolism. Functionally, catalyzes the biosynthesis of sphingolipids with very long-chain fatty acid (VLCFA). Required for the formation of plasmodesmal cytoplasmic sleeve during the transition from type I to type II plasmodesmata to modulate post-sieve elements (SE) unloading and symplastic cell-to-cell molecular trafficking at the phloem pole pericycle (PPP)-endodermis interface in roots. This Arabidopsis thaliana (Mouse-ear cress) protein is Protein PHLOEM UNLOADING MODULATOR.